Reading from the N-terminus, the 433-residue chain is GTPase Obg (433 aa).

One can recognise an Obg domain in the interval 1–159; that stretch reads MAFRDVLDIE…RRVRLELRLI (159 aa). Residues 160 to 327 enclose the OBG-type G domain; sequence ADVGLVGYPN…LRQALFDLLP (168 aa). ATP-binding positions include 166–173, 191–195, 214–217, 280–283, and 308–310; these read GYPNAGKS, FTTLS, DIPG, NKIE, and SAK. The Mg(2+) site is built by Ser173 and Thr193. In terms of domain architecture, OCT spans 342–430; the sequence is PEEVREEPLT…IGSFRFEYYA (89 aa).

It belongs to the TRAFAC class OBG-HflX-like GTPase superfamily. OBG GTPase family. As to quaternary structure, monomer. Mg(2+) serves as cofactor.

The protein localises to the cytoplasm. In terms of biological role, an essential GTPase which binds GTP, GDP and possibly (p)ppGpp with moderate affinity, with high nucleotide exchange rates and a fairly low GTP hydrolysis rate. Plays a role in control of the cell cycle, stress response, ribosome biogenesis and in those bacteria that undergo differentiation, in morphogenesis control. This chain is GTPase Obg, found in Deinococcus geothermalis (strain DSM 11300 / CIP 105573 / AG-3a).